A 327-amino-acid polypeptide reads, in one-letter code: Flap endonuclease 1 (327 aa).

Residues M1–R98 form an N-domain region. Positions 27, 80, 152, 154, 173, 175, and 226 each coordinate Mg(2+). The I-domain stretch occupies residues E116–G246. Positions S319 to F327 are interaction with PCNA.

The protein belongs to the XPG/RAD2 endonuclease family. FEN1 subfamily. Interacts with PCNA. PCNA stimulates the nuclease activity without altering cleavage specificity. It depends on Mg(2+) as a cofactor.

Structure-specific nuclease with 5'-flap endonuclease and 5'-3' exonuclease activities involved in DNA replication and repair. During DNA replication, cleaves the 5'-overhanging flap structure that is generated by displacement synthesis when DNA polymerase encounters the 5'-end of a downstream Okazaki fragment. Binds the unpaired 3'-DNA end and kinks the DNA to facilitate 5' cleavage specificity. Cleaves one nucleotide into the double-stranded DNA from the junction in flap DNA, leaving a nick for ligation. Also involved in the base excision repair (BER) pathway. Acts as a genome stabilization factor that prevents flaps from equilibrating into structures that lead to duplications and deletions. Also possesses 5'-3' exonuclease activity on nicked or gapped double-stranded DNA. The chain is Flap endonuclease 1 from Methanobrevibacter smithii (strain ATCC 35061 / DSM 861 / OCM 144 / PS).